Here is a 300-residue protein sequence, read N- to C-terminus: MNQSYGRLVSRAAIAATAMASALLLIKIFAWWYTGSVSILAALVDSLVDIAASLTNLLVVRYSLQPADEEHTFGHGKAESLAALAQSMFISGSALFLFLTGIQHLVRPEPLQAAGVGVVVTLIALVSTLALVTFQRWVVRKTQSQAVRADMLHYQSDVMMNGAILVALGLSWYGWHRADALFALGIGIYILYSALRMGYEAVQSLLDRALPDEERQDIITIVTAWPGIRGAHDLRTRQSGPTRFIQIHLEMEDNLPLVQAHVIADQVEQAILRRFPGSDVIIHQDPSSVVPAAQQGFFER.

Residues 24–44 (LLIKIFAWWYTGSVSILAALV) form a helical membrane-spanning segment. Zn(2+) is bound by residues Asp45 and Asp49. The next 2 membrane-spanning stretches (helical) occupy residues 82-102 (AALAQSMFISGSALFLFLTGI) and 114-134 (AGVGVVVTLIALVSTLALVTF). Residues His153 and Asp157 each contribute to the Zn(2+) site. A run of 2 helical transmembrane segments spans residues 156 to 176 (SDVMMNGAILVALGLSWYGWH) and 178 to 198 (ADALFALGIGIYILYSALRMG).

The protein belongs to the cation diffusion facilitator (CDF) transporter (TC 2.A.4) family. FieF subfamily. In terms of assembly, homodimer.

The protein localises to the cell inner membrane. The catalysed reaction is Zn(2+)(in) + H(+)(out) = Zn(2+)(out) + H(+)(in). It carries out the reaction Cd(2+)(in) + H(+)(out) = Cd(2+)(out) + H(+)(in). The enzyme catalyses Fe(2+)(in) + H(+)(out) = Fe(2+)(out) + H(+)(in). Divalent metal cation transporter which exports Zn(2+), Cd(2+) and possibly Fe(2+). May be involved in zinc and iron detoxification by efflux. The chain is Cation-efflux pump FieF from Klebsiella pneumoniae subsp. pneumoniae (strain ATCC 700721 / MGH 78578).